We begin with the raw amino-acid sequence, 389 residues long: Na(+)/H(+) antiporter NhaA (389 aa).

Helical transmembrane passes span 14 to 34 (AGGI…NSPL), 59 to 79 (LILW…GLEV), 95 to 115 (SLPT…YLLF), 124 to 144 (AGWA…MALL), 154 to 174 (VFLL…IALF), 177 to 197 (TDLS…LVGL), 213 to 233 (LILW…GVII), 257 to 277 (PWST…VYVG), 292 to 312 (IALG…YIAV), 328 to 348 (IAPV…IASL), and 363 to 383 (LGTL…LSKV).

This sequence belongs to the NhaA Na(+)/H(+) (TC 2.A.33) antiporter family.

The protein resides in the cell inner membrane. The enzyme catalyses Na(+)(in) + 2 H(+)(out) = Na(+)(out) + 2 H(+)(in). Functionally, na(+)/H(+) antiporter that extrudes sodium in exchange for external protons. The protein is Na(+)/H(+) antiporter NhaA of Shewanella baltica (strain OS155 / ATCC BAA-1091).